The sequence spans 231 residues: Flagellar L-ring protein (231 aa).

The signal sequence occupies residues 1-18 (MSRLLIVVSLSSAFALAG). A lipid anchor (N-palmitoyl cysteine) is attached at Cys19. Cys19 carries the S-diacylglycerol cysteine lipid modification.

This sequence belongs to the FlgH family. In terms of assembly, the basal body constitutes a major portion of the flagellar organelle and consists of four rings (L,P,S, and M) mounted on a central rod.

It is found in the cell outer membrane. The protein resides in the bacterial flagellum basal body. Its function is as follows. Assembles around the rod to form the L-ring and probably protects the motor/basal body from shearing forces during rotation. This Stutzerimonas stutzeri (strain A1501) (Pseudomonas stutzeri) protein is Flagellar L-ring protein.